The sequence spans 206 residues: 2-phospho-L-lactate guanylyltransferase (206 aa).

It belongs to the CofC family. Homodimer.

It catalyses the reaction (2S)-2-phospholactate + GTP + H(+) = (2S)-lactyl-2-diphospho-5'-guanosine + diphosphate. It functions in the pathway cofactor biosynthesis; coenzyme F420 biosynthesis. Its function is as follows. Guanylyltransferase that catalyzes the activation of (2S)-2-phospholactate (2-PL) as (2S)-lactyl-2-diphospho-5'-guanosine, via the condensation of 2-PL with GTP. It is involved in the biosynthesis of coenzyme F420, a hydride carrier cofactor. This chain is 2-phospho-L-lactate guanylyltransferase, found in Archaeoglobus fulgidus (strain ATCC 49558 / DSM 4304 / JCM 9628 / NBRC 100126 / VC-16).